Here is a 117-residue protein sequence, read N- to C-terminus: Non-specific lipid-transfer protein 2 (117 aa).

A signal peptide spans 1-25; it reads MAGLMKLACLVLACMIVAGPITSNA. 4 cysteine pairs are disulfide-bonded: Cys29–Cys76, Cys39–Cys53, Cys54–Cys99, and Cys74–Cys113.

The protein belongs to the plant LTP family.

Plant non-specific lipid-transfer proteins transfer phospholipids as well as galactolipids across membranes. May play a role in wax or cutin deposition in the cell walls of expanding epidermal cells and certain secretory tissues. This Brassica napus (Rape) protein is Non-specific lipid-transfer protein 2 (LTP2).